The sequence spans 199 residues: Ribosomal RNA large subunit methyltransferase E (199 aa).

Gly53, Trp55, Asp73, Asp92, and Asp114 together coordinate S-adenosyl-L-methionine. Lys154 acts as the Proton acceptor in catalysis.

The protein belongs to the class I-like SAM-binding methyltransferase superfamily. RNA methyltransferase RlmE family.

Its subcellular location is the cytoplasm. The enzyme catalyses uridine(2552) in 23S rRNA + S-adenosyl-L-methionine = 2'-O-methyluridine(2552) in 23S rRNA + S-adenosyl-L-homocysteine + H(+). Functionally, specifically methylates the uridine in position 2552 of 23S rRNA at the 2'-O position of the ribose in the fully assembled 50S ribosomal subunit. This Treponema denticola (strain ATCC 35405 / DSM 14222 / CIP 103919 / JCM 8153 / KCTC 15104) protein is Ribosomal RNA large subunit methyltransferase E.